The primary structure comprises 175 residues: Co-chaperone protein HscB homolog (175 aa).

The region spanning 7–79 (SHFALFNLPE…LKRARYLLSL (73 aa)) is the J domain.

It belongs to the HscB family. As to quaternary structure, interacts with HscA and stimulates its ATPase activity.

Its function is as follows. Co-chaperone involved in the maturation of iron-sulfur cluster-containing proteins. Seems to help targeting proteins to be folded toward HscA. In Paraburkholderia phymatum (strain DSM 17167 / CIP 108236 / LMG 21445 / STM815) (Burkholderia phymatum), this protein is Co-chaperone protein HscB homolog.